The primary structure comprises 309 residues: Glutaminase (309 aa).

7 residues coordinate substrate: serine 64, asparagine 114, glutamate 160, asparagine 167, tyrosine 191, tyrosine 243, and valine 261.

This sequence belongs to the glutaminase family. Homotetramer.

The catalysed reaction is L-glutamine + H2O = L-glutamate + NH4(+). The polypeptide is Glutaminase (Rhizobium rhizogenes (strain K84 / ATCC BAA-868) (Agrobacterium radiobacter)).